The chain runs to 273 residues: Shikimate dehydrogenase (NADP(+)) (273 aa).

Shikimate contacts are provided by residues 19–21 and threonine 66; that span reads SKS. Lysine 70 acts as the Proton acceptor in catalysis. The shikimate site is built by asparagine 91 and aspartate 107. Residues 131 to 135 and methionine 218 contribute to the NADP(+) site; that span reads GAGGA. Residue tyrosine 220 participates in shikimate binding. Position 242 (glycine 242) interacts with NADP(+).

Belongs to the shikimate dehydrogenase family. Homodimer.

The catalysed reaction is shikimate + NADP(+) = 3-dehydroshikimate + NADPH + H(+). It functions in the pathway metabolic intermediate biosynthesis; chorismate biosynthesis; chorismate from D-erythrose 4-phosphate and phosphoenolpyruvate: step 4/7. Involved in the biosynthesis of the chorismate, which leads to the biosynthesis of aromatic amino acids. Catalyzes the reversible NADPH linked reduction of 3-dehydroshikimate (DHSA) to yield shikimate (SA). This chain is Shikimate dehydrogenase (NADP(+)), found in Buchnera aphidicola subsp. Acyrthosiphon pisum (strain 5A).